The sequence spans 300 residues: F-box/LRR-repeat protein 15 (300 aa).

Met-1 is modified (N-acetylmethionine). An F-box domain is found at 19-66 (LLDLPWEDVLLPHILSRVPLRQLLRLQRVSRAFRALVQLHLAGLRRFD). Positions 113 to 269 (NPQLRSVALA…EPSLSRLRKR (157 aa)) are interaction with SMURF1. 5 LRR repeats span residues 141–162 (RLQR…RGLA), 167–188 (ALEE…VYLA), 194–215 (GLRS…QELA), 220–241 (ELEH…RTLA), and 246–267 (ALRS…SRLR).

This sequence belongs to the FBXL15 family. As to quaternary structure, part of the SCF (SKP1-CUL1-F-box) E3 ubiquitin-protein ligase complex SCF(FBXL15) composed of CUL1, SKP1, RBX1 and FBXL15.

It is found in the cytoplasm. The protein operates within protein modification; protein ubiquitination. Its function is as follows. Substrate recognition component of a SCF (SKP1-CUL1-F-box protein) E3 ubiquitin-protein ligase complex which mediates the ubiquitination and subsequent proteasomal degradation of SMURF1, thereby acting as a positive regulator of the BMP signaling pathway. Required for dorsal/ventral pattern formation and bone mass maintenance. Also mediates ubiquitination of SMURF2 and WWP2. The chain is F-box/LRR-repeat protein 15 (FBXL15) from Canis lupus familiaris (Dog).